Here is a 484-residue protein sequence, read N- to C-terminus: Gasdermin-D (484 aa).

The residue at position 37 (Y37) is a Phosphotyrosine. Position 56 is an S-(2-succinyl)cysteine (C56). Transmembrane regions (beta stranded) follow at residues Q91–A97 and K103–A108. Y158 bears the Phosphotyrosine mark. 2 consecutive transmembrane segments (beta stranded) span residues G180–L186 and C191–Q197. S185 carries the phosphoserine modification. S-(2-succinyl)cysteine is present on residues C191 and C268. C191 carries the S-palmitoyl cysteine lipid modification. Residues V277–T296 are linker helix loop. Position 309 is an S-(2-succinyl)cysteine (C309). Residue S338 is glycosylated (O-linked (GlcNAc) serine). C467 is modified (S-(2-succinyl)cysteine).

It belongs to the gasdermin family. Homooligomer; homooligomeric ring-shaped pore complex containing 27-28 subunits when inserted in the membrane. Homooligomerization is promoted by the mTORC1 complex in macrophages. In response to a canonical inflammasome stimulus, such as nigericin, recruited to NLRP3 inflammasone with similar kinetics to that of uncleaved CASP1 precursor. Although this recruitment is also observed in the absence of PYCARD, it is more efficient in its presence. In terms of processing, cleavage at Asp-275 by CASP1 (mature and uncleaved precursor forms), CASP4, CASP5 or CASP8 relieves autoinhibition and is sufficient to initiate pyroptosis. Cleavage by CASP1 and CASP4 is not strictly dependent on the consensus cleavage site on GSDMD but depends on an exosite interface on CASP1 that recognizes and binds the Gasdermin-D, C-terminal (GSDMD-CT) part. Cleavage by CASP8 takes place following inactivation of MAP3K7/TAK1 by Yersinia toxin YopJ. Cleavage at Asp-87 by CASP3 or CASP7 inactivates the ability to mediate pyroptosis, but generates the Gasdermin-D, p13 chain, which translocates to the nucleus and acts as a transcription regulator. Cleavage by papain allergen generates the Gasdermin-D, p40 chain. Palmitoylated at Cys-191 by ZDHHC5 and ZDHHC9 in response to microbial infection and danger signals. Palmitoylation takes place before cleavage by caspases (CASP1, CASP4, CASP5 or CASP8) and is required for membrane translocation and pore formation. Depalmitoylated by LYPLA2. Post-translationally, succination of Cys-191 by the Krebs cycle intermediate fumarate, which leads to S-(2-succinyl)cysteine residues, inhibits processing by caspases, and ability to initiate pyroptosis. Succination modification is catalyzed by a non-enzymatic reaction caused by an accumulation of fumarate. In terms of processing, glycosylated: O-GlcNAcylation by OGT leads to reduced cleavage by CASP4 and decreased LPS-induced endothelial cell pyroptosis. (Microbial infection) Cleaved and inactivated by Protease 3C from Human enterovirus 71 (EV71), preventing GSDMD-mediated pyroptosis. Post-translationally, (Microbial infection) Cleaved and inactivated by the 3C-like proteinase nsp5 from human coronavirus SARS-CoV-2, preventing GSDMD-mediated pyroptosis. In terms of processing, (Microbial infection) Ubiquitinated by S.flexneri IpaH7.8, leading to its degradation by the proteasome. As to expression, expressed in the suprabasal cells of esophagus, as well as in the isthmus/neck, pit, and gland of the stomach, suggesting preferential expression in differentiating cells.

It is found in the cytoplasm. It localises to the cytosol. The protein localises to the inflammasome. Its subcellular location is the cell membrane. The protein resides in the secreted. It is found in the mitochondrion membrane. It localises to the nucleus. With respect to regulation, the full-length protein before cleavage is inactive: intramolecular interactions between N- and C-terminal domains mediate autoinhibition in the absence of activation signal. The intrinsic pyroptosis-inducing activity is carried by the released N-terminal moiety (Gasdermin-D, N-terminal) following cleavage by caspases CASP1, CASP4, CASP5 or CASP8. Cleavage at Asp-87 by CASP3 or CASP7 inactivates the ability to mediate pyroptosis. Homooligomerization and pore formation is specifically inhibited by VHH(GSDMD-1) and, to a lesser extent, VHH(GSDMD-2) nanobodies, protecting against excessive pyroptosis. Inhibited by small molecule NU6300, which covalently reacts with Cys-191, thereby preventing palmitoylation and pyroptosis. Functionally, precursor of a pore-forming protein that plays a key role in host defense against pathogen infection and danger signals. This form constitutes the precursor of the pore-forming protein: upon cleavage, the released N-terminal moiety (Gasdermin-D, N-terminal) binds to membranes and forms pores, triggering pyroptosis. In terms of biological role, promotes pyroptosis in response to microbial infection and danger signals. Produced by the cleavage of gasdermin-D by inflammatory caspases CASP1, CASP4 or CASP5 in response to canonical, as well as non-canonical (such as cytosolic LPS) inflammasome activators. After cleavage, moves to the plasma membrane where it strongly binds to inner leaflet lipids, including monophosphorylated phosphatidylinositols, such as phosphatidylinositol 4-phosphate, bisphosphorylated phosphatidylinositols, such as phosphatidylinositol (4,5)-bisphosphate, as well as phosphatidylinositol (3,4,5)-bisphosphate, and more weakly to phosphatidic acid and phosphatidylserine. Homooligomerizes within the membrane and forms pores of 10-15 nanometers (nm) of inner diameter, allowing the release of mature interleukin-1 (IL1B and IL18) and triggering pyroptosis. Gasdermin pores also allow the release of mature caspase-7 (CASP7). In some, but not all, cells types, pyroptosis is followed by pyroptotic cell death, which is caused by downstream activation of ninjurin-1 (NINJ1), which mediates membrane rupture (cytolysis). Also forms pores in the mitochondrial membrane, resulting in release of mitochondrial DNA (mtDNA) into the cytosol. Gasdermin-D, N-terminal released from pyroptotic cells into the extracellular milieu rapidly binds to and kills both Gram-negative and Gram-positive bacteria, without harming neighboring mammalian cells, as it does not disrupt the plasma membrane from the outside due to lipid-binding specificity. Under cell culture conditions, also active against intracellular bacteria, such as Listeria monocytogenes. Also active in response to MAP3K7/TAK1 inactivation by Yersinia toxin YopJ, which triggers cleavage by CASP8 and subsequent activation. Required for mucosal tissue defense against enteric pathogens. Activation of the non-canonical inflammasome in brain endothelial cells can lead to excessive pyroptosis, leading to blood-brain barrier breakdown. Strongly binds to bacterial and mitochondrial lipids, including cardiolipin. Does not bind to unphosphorylated phosphatidylinositol, phosphatidylethanolamine nor phosphatidylcholine. Its function is as follows. Transcription coactivator produced by the cleavage by CASP3 or CASP7 in the upper small intestine in response to dietary antigens. Required to maintain food tolerance in small intestine: translocates to the nucleus and acts as a coactivator for STAT1 to induce the transcription of CIITA and MHC class II molecules, which in turn induce type 1 regulatory T (Tr1) cells in upper small intestine. Produced by the cleavage by papain allergen. After cleavage, moves to the plasma membrane and homooligomerizes within the membrane and forms pores of 10-15 nanometers (nm) of inner diameter, allowing the specific release of mature interleukin-33 (IL33), promoting type 2 inflammatory immune response. This chain is Gasdermin-D, found in Homo sapiens (Human).